We begin with the raw amino-acid sequence, 132 residues long: UPF0357 protein YCL012C (132 aa).

The first 25 residues, 1 to 25, serve as a signal peptide directing secretion; it reads MWDLFYFKVFFWVVLISLCIFMVHR.

The protein belongs to the UPF0357 family.

The sequence is that of UPF0357 protein YCL012C (YCL012C) from Saccharomyces bayanus (Yeast).